A 424-amino-acid chain; its full sequence is Tyrosine--tRNA ligase (424 aa).

Y37 lines the L-tyrosine pocket. The 'HIGH' region signature appears at 42 to 51 (PTADSLHLGH). Residues Y175 and Q179 each contribute to the L-tyrosine site. The 'KMSKS' region motif lies at 235-239 (KFGKT). An ATP-binding site is contributed by K238. One can recognise an S4 RNA-binding domain in the interval 357–414 (ADLQQALVNAELVPSRGQARTMIGSNAVAINGEKQADPEYVFTDADRLFGRYTLLRRG).

It belongs to the class-I aminoacyl-tRNA synthetase family. TyrS type 1 subfamily. As to quaternary structure, homodimer.

It localises to the cytoplasm. It carries out the reaction tRNA(Tyr) + L-tyrosine + ATP = L-tyrosyl-tRNA(Tyr) + AMP + diphosphate + H(+). In terms of biological role, catalyzes the attachment of tyrosine to tRNA(Tyr) in a two-step reaction: tyrosine is first activated by ATP to form Tyr-AMP and then transferred to the acceptor end of tRNA(Tyr). The sequence is that of Tyrosine--tRNA ligase from Yersinia pseudotuberculosis serotype O:1b (strain IP 31758).